We begin with the raw amino-acid sequence, 292 residues long: Elongation factor Ts (292 aa).

The interval 80–83 is involved in Mg(2+) ion dislocation from EF-Tu; it reads TDFV.

This sequence belongs to the EF-Ts family.

The protein resides in the cytoplasm. Its function is as follows. Associates with the EF-Tu.GDP complex and induces the exchange of GDP to GTP. It remains bound to the aminoacyl-tRNA.EF-Tu.GTP complex up to the GTP hydrolysis stage on the ribosome. This is Elongation factor Ts from Cupriavidus metallidurans (strain ATCC 43123 / DSM 2839 / NBRC 102507 / CH34) (Ralstonia metallidurans).